The following is a 166-amino-acid chain: Putative pre-16S rRNA nuclease (166 aa).

The disordered stretch occupies residues 1–24 (MPDTAAPTPDRPGPDDPGRGRRLG).

This sequence belongs to the YqgF nuclease family.

The protein resides in the cytoplasm. In terms of biological role, could be a nuclease involved in processing of the 5'-end of pre-16S rRNA. The protein is Putative pre-16S rRNA nuclease of Mycobacteroides abscessus (strain ATCC 19977 / DSM 44196 / CCUG 20993 / CIP 104536 / JCM 13569 / NCTC 13031 / TMC 1543 / L948) (Mycobacterium abscessus).